A 424-amino-acid chain; its full sequence is Nuclear hormone receptor family member nhr-55 (424 aa).

Low complexity predominate over residues 1 to 19; that stretch reads MNSPSSSSSFCSSSSSPSS. A disordered region spans residues 1–20; it reads MNSPSSSSSFCSSSSSPSSL. A DNA-binding region (nuclear receptor) is located at residues 25-100; sequence PDTCQVCGQK…VGMTIENFQF (76 aa). 2 NR C4-type zinc fingers span residues 28-55 and 64-88; these read CQVCGQKSHGKHFGAVTCRACAAFFRRC and CRRNMNCEFLKNGWFNCKPCRLKKC. The NR LBD domain maps to 169 to 424; it reads EVPLHTPNAL…FSHPEVFIDL (256 aa).

The protein belongs to the nuclear hormone receptor family.

The protein resides in the nucleus. Functionally, orphan nuclear receptor. In Caenorhabditis elegans, this protein is Nuclear hormone receptor family member nhr-55 (nhr-55).